Reading from the N-terminus, the 525-residue chain is Probable pectinesterase/pectinesterase inhibitor 44 (525 aa).

An N-terminal signal peptide occupies residues 1 to 19; sequence MSCLKYFLILLMLGLCVSS. Residues 30–153 form a pectinesterase inhibitor 44 region; the sequence is VPASEFVSSI…YSMLRELLPL (124 aa). N-linked (GlcNAc...) asparagine glycosylation is present at N98. A disordered region spans residues 157–192; it reads EQKPKAVSKPGPIAKGPKAPPGRKLRDTDEDESLQF. A pectinesterase 44 region spans residues 212 to 509; it reads DVSVALDGTG…FTVSQFIKGN (298 aa). N-linked (GlcNAc...) asparagine glycosylation is found at N222 and N278. Residues T287 and Q317 each coordinate substrate. D340 functions as the Proton donor; for pectinesterase activity in the catalytic mechanism. The cysteines at positions 354 and 374 are disulfide-linked. D361 acts as the Nucleophile; for pectinesterase activity in catalysis. N-linked (GlcNAc...) asparagine glycosylation is found at N409 and N421. 2 residues coordinate substrate: R429 and W431. N-linked (GlcNAc...) asparagine glycosylation is found at N443, N492, and N499.

This sequence in the N-terminal section; belongs to the PMEI family. In the C-terminal section; belongs to the pectinesterase family. Expressed in siliques.

It localises to the secreted. The protein localises to the cell wall. The catalysed reaction is [(1-&gt;4)-alpha-D-galacturonosyl methyl ester](n) + n H2O = [(1-&gt;4)-alpha-D-galacturonosyl](n) + n methanol + n H(+). Its pathway is glycan metabolism; pectin degradation; 2-dehydro-3-deoxy-D-gluconate from pectin: step 1/5. Acts in the modification of cell walls via demethylesterification of cell wall pectin. This Arabidopsis thaliana (Mouse-ear cress) protein is Probable pectinesterase/pectinesterase inhibitor 44 (PME44).